Reading from the N-terminus, the 120-residue chain is Large ribosomal subunit protein uL22 (120 aa).

A disordered region spans residues 1 to 25 (MFVNKKYTAKGKNLPSSPKKVRPIA).

This sequence belongs to the universal ribosomal protein uL22 family. As to quaternary structure, part of the 50S ribosomal subunit.

In terms of biological role, this protein binds specifically to 23S rRNA; its binding is stimulated by other ribosomal proteins, e.g. L4, L17, and L20. It is important during the early stages of 50S assembly. It makes multiple contacts with different domains of the 23S rRNA in the assembled 50S subunit and ribosome. The globular domain of the protein is located near the polypeptide exit tunnel on the outside of the subunit, while an extended beta-hairpin is found that lines the wall of the exit tunnel in the center of the 70S ribosome. The polypeptide is Large ribosomal subunit protein uL22 (Borrelia recurrentis (strain A1)).